The following is a 390-amino-acid chain: MKFVDEASILVVAGDGGNGCVSFRREKYIPKGGPDGGDGGDGGDVWMEADENLNTLIDYRFEKSFRAERGQNGASRDCTGKRGKDVTIKVPVGTRVIDQGTGETMGDMTKHGQRLLVAKGGWHGLGNTRFKSSVNRTPRQKTNGTPGDKRELLLELMLLADVGMLGMPNAGKSTFIRAVSAAKPKVADYPFTTLVPSLGVVRMDNEKSFVVADIPGLIEGAAEGAGLGIRFLKHLERCRVLLHLIDIDPIDGTDPVENARIIISELEKYSQDLAAKPRWLVFNKIDLLDKAEAEEKAKAIAEALGWEDKYYLISAASGLGVKDLCWDVMTFIIENPVVQDEEAKQPEKVEFMWDDYHRQQLEEIAEEDDEDWDDDWDEDDEEGVEFIYKR.

Residues 1–159 enclose the Obg domain; that stretch reads MKFVDEASIL…RELLLELMLL (159 aa). Residues 127 to 147 are disordered; sequence NTRFKSSVNRTPRQKTNGTPG. Residues 129-145 are compositionally biased toward polar residues; sequence RFKSSVNRTPRQKTNGT. The region spanning 160 to 333 is the OBG-type G domain; it reads ADVGMLGMPN…LCWDVMTFII (174 aa). Residues 166–173, 191–195, 213–216, 283–286, and 314–316 each bind GTP; these read GMPNAGKS, FTTLV, DIPG, NKID, and SAA. Residues Ser173 and Thr193 each contribute to the Mg(2+) site.

This sequence belongs to the TRAFAC class OBG-HflX-like GTPase superfamily. OBG GTPase family. Monomer. Requires Mg(2+) as cofactor.

Its subcellular location is the cytoplasm. In terms of biological role, an essential GTPase which binds GTP, GDP and possibly (p)ppGpp with moderate affinity, with high nucleotide exchange rates and a fairly low GTP hydrolysis rate. Plays a role in control of the cell cycle, stress response, ribosome biogenesis and in those bacteria that undergo differentiation, in morphogenesis control. The chain is GTPase Obg from Shigella dysenteriae serotype 1 (strain Sd197).